Consider the following 305-residue polypeptide: Dioxygenase hkm4 (305 aa).

Fe cation is bound by residues His-140, Asp-142, and His-216.

This sequence belongs to the PhyH family. It depends on Fe cation as a cofactor.

Its pathway is secondary metabolite biosynthesis. Functionally, dioxygenase; part of the gene cluster that mediates the biosynthesis of hancockiamides, an unusual new family of N-cinnamoylated piperazines. The NRPS hkm10 and the NmrA-like reductase hkm9 are proposed to convert two molecules of L-Phe to the intermediary piperazine called xenocockiamide A. Xenocockiamide A is then converted to hancockiamide D via a series of hydroxylations and O-methylations. The tyrosinase hkm6 may catalyze an aromatic hydroxylation, then the 2-oxoglutarate-dependent Fe(II) dioxygenase hkm4 and the FAD-dependent phenol hydroxylase hkm7 may catalyze consecutive hydroxylations to install 2 more hydroxy groups, and the methyltransferase hkm8 probably catalyzes two methylations using 2 molecules of S-adenosyl-L-methionine (SAM). The NRPS hkm11 activates and transfers trans-cinnamate supplied by the PAL hkm12 to hancockiamide D and produces hancockiamide A. NRPS Hkm11 has the flexibility to tolerate the bulky hancockiamide G as a substrate and the absence of the acetyl-transferase hkm3 opens up the opportunity for hkm11 to introduce a second N-cinnamoyl moiety. The cytochrome P450 monooxygenase hkm5 catalyzes the methylenedioxy bridge formation, converting hancockiamide A into hancockiamide G. Hkm5 can also convert hancockiamide B into hancockiamide C, and hancockiamide D into hancockiamide H. The N-acetyltransferase hkm3 finally transfers an acetyl group to 1-N of piperazine, converting hancockiamide A into hancockiamide B and hancockiamide G into hancockiamide C. The protein is Dioxygenase hkm4 of Aspergillus hancockii.